The following is a 125-amino-acid chain: Ly6/PLAUR domain-containing protein 2 (125 aa).

The N-terminal stretch at 1–22 (MRGTRLALLALVLAACGELAPA) is a signal peptide. One can recognise a UPAR/Ly6 domain in the interval 25–100 (CYVCPEPTGV…VSCCNTELCN (76 aa)). The N-linked (GlcNAc...) asparagine glycan is linked to Asn46. Gly103 carries the GPI-anchor amidated glycine lipid modification. Residues 104 to 125 (APALNSLHCGALTLLPLLSLRL) constitute a propeptide, removed in mature form.

It is found in the cell membrane. The polypeptide is Ly6/PLAUR domain-containing protein 2 (LYPD2) (Homo sapiens (Human)).